Consider the following 918-residue polypeptide: Melanoma-associated antigen E1 (918 aa).

Disordered stretches follow at residues 1–140 (MSLV…GSKA), 154–227 (EQRH…SNGL), and 367–388 (SQMS…ANNP). Over residues 8–23 (SRRRRGGRANARRNNG) the composition is skewed to basic residues. 3 stretches are compositionally biased toward polar residues: residues 70–96 (VPPT…SEMP), 113–126 (GLNT…SEGP), and 213–227 (EDPS…SNGL). MAGE domains are found at residues 459 to 658 (MEQN…YNEA) and 706 to 897 (LESK…YREA). Residues 704 to 918 (SRLESKARKL…RRPLIVRNLR (215 aa)) are interaction with DTNA.

In terms of assembly, interacts with DTNA. Interacts with TRIM28. As to expression, expressed in cell bodies and dendrites of hippocampal and Purkinje neurons. Also expressed in peripheral nerve, where it localizes to the perineurium and myelin (at protein level). Predominantly expressed in brain and at low levels in the heart, liver, kidney, spleen, testis, lung, thymus, placenta and skeletal muscle.

The protein resides in the cytoplasm. Its subcellular location is the perinuclear region. It localises to the nucleus. The protein localises to the cell membrane. Its function is as follows. May enhance ubiquitin ligase activity of RING-type zinc finger-containing E3 ubiquitin-protein ligases. Proposed to act through recruitment and/or stabilization of the Ubl-conjugating enzyme (E2) at the E3:substrate complex. The sequence is that of Melanoma-associated antigen E1 (Magee1) from Mus musculus (Mouse).